A 515-amino-acid chain; its full sequence is Putative acetolactate synthase large subunit IlvX (515 aa).

Glu48 contacts thiamine diphosphate. Residues 249–269 (FAEGAAAQLDGVKHLVLAGAR) and 283–302 (DLVPAGCEVHVLAEPGGAAD) each bind FAD. Residues 357 to 436 (TCGVLLPQAT…VTTVIYNNGA (80 aa)) are thiamine pyrophosphate binding. Mg(2+)-binding residues include Asp407 and Asn434.

Belongs to the TPP enzyme family. As to quaternary structure, heterodimer of large catalytic subunit and small regulatory subunit. Mg(2+) is required as a cofactor. It depends on thiamine diphosphate as a cofactor.

The catalysed reaction is 2 pyruvate + H(+) = (2S)-2-acetolactate + CO2. Its pathway is amino-acid biosynthesis; L-isoleucine biosynthesis; L-isoleucine from 2-oxobutanoate: step 1/4. It participates in amino-acid biosynthesis; L-valine biosynthesis; L-valine from pyruvate: step 1/4. Its function is as follows. Catalyzes the conversion of 2 pyruvate molecules into acetolactate in the first common step of the biosynthetic pathway of the branched-amino acids such as leucine, isoleucine, and valine. This Mycobacterium tuberculosis (strain ATCC 25618 / H37Rv) protein is Putative acetolactate synthase large subunit IlvX (ilvX).